A 904-amino-acid chain; its full sequence is Toll-like receptor 3 (904 aa).

Positions methionine 1 to alanine 26 are cleaved as a signal peptide. The 26-residue stretch at histidine 27 to threonine 52 folds into the LRRNT domain. Residues histidine 27–leucine 705 lie on the Lumenal side of the membrane. Cysteines 29 and 38 form a disulfide. 3 N-linked (GlcNAc...) asparagine glycosylation sites follow: asparagine 53, asparagine 58, and asparagine 71. 6 LRR repeats span residues asparagine 53–arginine 74, arginine 77–asparagine 98, tryptophan 101–phenylalanine 122, asparagine 125–asparagine 146, asparagine 149–glutamine 170, and asparagine 173–glycine 196. Cysteine 96 and cysteine 123 are disulfide-bonded. Asparagine 125 carries an N-linked (GlcNAc...) asparagine glycan. Residue asparagine 197 is glycosylated (N-linked (GlcNAc...) asparagine). 2 LRR repeats span residues serine 199–alanine 220 and lysine 223–glutamate 245. N-linked (GlcNAc...) asparagine glycans are attached at residues asparagine 248, asparagine 253, asparagine 276, and asparagine 292. LRR repeat units lie at residues serine 250 to glycine 271, asparagine 276 to tryptophan 297, histidine 300 to glycine 321, asparagine 324 to proline 345, cysteine 357 to glycine 378, arginine 381 to threonine 401, proline 409 to tryptophan 430, histidine 433 to glycine 455, tyrosine 466 to methionine 487, asparagine 508 to glycine 529, lysine 532 to glycine 553, histidine 564 to aspartate 585, glutamate 588 to asparagine 609, and serine 612 to proline 633. N-linked (GlcNAc...) asparagine glycans are attached at residues asparagine 399 and asparagine 414. N-linked (GlcNAc...) asparagine glycans are attached at residues asparagine 637, asparagine 663, and asparagine 668. Positions asparagine 646–aspartate 699 constitute an LRRCT domain. 2 disulfides stabilise this stretch: cysteine 650–cysteine 678 and cysteine 652–cysteine 697. The chain crosses the membrane as a helical span at residues leucine 706–phenylalanine 726. Over glutamate 727–histidine 904 the chain is Cytoplasmic. The TIR domain occupies phenylalanine 754–leucine 897. Tyrosine 759 is subject to Phosphotyrosine. Glycyl lysine isopeptide (Lys-Gly) (interchain with G-Cter in ubiquitin) cross-links involve residues lysine 812 and lysine 831. Position 858 is a phosphotyrosine (tyrosine 858).

The protein belongs to the Toll-like receptor family. In terms of assembly, monomer and homodimer; dimerization is triggered by ligand-binding and is required for TLR3 signaling. Interacts (via transmembrane domain) with UNC93B1. Interacts with TICAM1 (via the TIR domain) in response to poly(I:C) and this interaction is enhanced the presence of WDFY1. Interacts with SRC; upon binding of double-stranded RNA. The tyrosine-phosphorylated form (via TIR domain) interacts with WDFY1 (via WD repeat 2) in response to poly(I:C). Ubiquitinated by TRIM3; leading to recognition and sorting of polyubiquitinated TLR3 by the ESCRT complexes. Ubiquitinated by ZNRF1 via 'Lys-63'-linked ubiquitin chains; leading to TLR3 lysosomal trafficking and degradation.

It is found in the endoplasmic reticulum membrane. It localises to the endosome membrane. The protein localises to the early endosome. Its function is as follows. Key component of innate and adaptive immunity. TLRs (Toll-like receptors) control host immune response against pathogens through recognition of molecular patterns specific to microorganisms. TLR3 is a nucleotide-sensing TLR which is activated by double-stranded RNA, a sign of viral infection. Acts via the adapter TRIF/TICAM1, leading to NF-kappa-B activation, cytokine secretion and the inflammatory response. This chain is Toll-like receptor 3 (TLR3), found in Boselaphus tragocamelus (Nilgai).